Consider the following 87-residue polypeptide: Small ribosomal subunit protein bS20 (87 aa).

Residues 1-22 form a disordered region; that stretch reads MANIKSQIKRNKTNEKARLRNQ.

This sequence belongs to the bacterial ribosomal protein bS20 family.

In terms of biological role, binds directly to 16S ribosomal RNA. The protein is Small ribosomal subunit protein bS20 of Corynebacterium glutamicum (strain R).